We begin with the raw amino-acid sequence, 345 residues long: uncharacterized protein (345 aa).

The protein belongs to the transketolase family. Thiamine diphosphate serves as cofactor.

This is an uncharacterized protein from Sinorhizobium fredii (strain NBRC 101917 / NGR234).